The following is a 178-amino-acid chain: ADP-ribosylation factor-like protein 5 (178 aa).

The N-myristoyl glycine moiety is linked to residue Gly-2. Residues Gly-24–Thr-31, Asp-67–Gln-71, and Asn-126–Asp-129 contribute to the GTP site.

The protein belongs to the small GTPase superfamily. Arf family.

It is found in the golgi apparatus. Its function is as follows. GTP-binding protein that may be involved in protein trafficking; may modulate vesicle budding and uncoating within the Golgi apparatus. Plays a role in the shedding of pathogen spores from intestinal cells. The chain is ADP-ribosylation factor-like protein 5 (arl-5) from Caenorhabditis elegans.